A 388-amino-acid chain; its full sequence is Chorismate synthase (388 aa).

Residues Arg39 and Arg45 each contribute to the NADP(+) site. The segment at 95–118 (EKNEKSRRVSRPRPGHADLVGGMK) is disordered. Residues 130–132 (RSS), 251–252 (NA), Gly296, 311–315 (KPIPT), and Arg337 each bind FMN.

It belongs to the chorismate synthase family. As to quaternary structure, homotetramer. The cofactor is FMNH2.

It carries out the reaction 5-O-(1-carboxyvinyl)-3-phosphoshikimate = chorismate + phosphate. It functions in the pathway metabolic intermediate biosynthesis; chorismate biosynthesis; chorismate from D-erythrose 4-phosphate and phosphoenolpyruvate: step 7/7. In terms of biological role, catalyzes the anti-1,4-elimination of the C-3 phosphate and the C-6 proR hydrogen from 5-enolpyruvylshikimate-3-phosphate (EPSP) to yield chorismate, which is the branch point compound that serves as the starting substrate for the three terminal pathways of aromatic amino acid biosynthesis. This reaction introduces a second double bond into the aromatic ring system. This chain is Chorismate synthase, found in Listeria monocytogenes serovar 1/2a (strain ATCC BAA-679 / EGD-e).